Consider the following 422-residue polypeptide: Choline monooxygenase, chloroplastic (422 aa).

Residues 1-47 constitute a chloroplast transit peptide; the sequence is MMTTLTATVPEFLPPSLKSTRGYFNSHSEFGVSISKFSRRRFHNPTR. A Rieske domain is found at 96–203; sequence WQAVGYSDQI…VAVWGPFVLL (108 aa). Positions 138, 140, 157, and 160 each coordinate [2Fe-2S] cluster. Fe cation-binding residues include His269 and His274.

It belongs to the choline monooxygenase family. It depends on [2Fe-2S] cluster as a cofactor. The cofactor is Fe cation. Mg(2+) is required as a cofactor.

The protein resides in the plastid. It is found in the chloroplast stroma. It carries out the reaction choline + 2 reduced [2Fe-2S]-[ferredoxin] + O2 + 2 H(+) = betaine aldehyde hydrate + 2 oxidized [2Fe-2S]-[ferredoxin] + H2O. Its pathway is amine and polyamine biosynthesis; betaine biosynthesis via choline pathway; betaine aldehyde from choline (monooxygenase route): step 1/1. Catalyzes the first step of the osmoprotectant glycine betaine synthesis. The chain is Choline monooxygenase, chloroplastic from Arabidopsis thaliana (Mouse-ear cress).